A 208-amino-acid polypeptide reads, in one-letter code: Ras-related protein M-Ras (208 aa).

14 residues coordinate GTP: D21, G22, G23, V24, G25, K26, S27, A28, F38, V39, P40, Y42, P44, and T45. S27 contacts Mg(2+). The short motif at 42–50 (YDPTIEDSY) is the Effector region element. Mg(2+)-binding residues include T45 and D67. GTP is bound by residues G70, N126, K127, D129, S156, A157, and K158. C205 is subject to Cysteine methyl ester. C205 carries the S-geranylgeranyl cysteine lipid modification. Residues 206 to 208 (VIL) constitute a propeptide, removed in mature form.

The protein belongs to the small GTPase superfamily. Ras family. As to quaternary structure, component of the SHOC2-MRAS-PP1c (SMP) holophosphatase complex consisting of SHOC2, GTP-bound M-Ras/MRAS and the catalytic subunit of protein phosphatase 1 (either PPP1CA, PPP1CB or PPP1CC). Interacts (active GTP-bound form) with both SHOC2 and PP1c (all isoforms) to form a tertiary complex; SHOC2 and PP1c preferably bind M-Ras/MRAS, but they also bind K-Ras/KRAS, N-Ras/NRAS and H-Ras/HRAS. Interacts with RGL3. Interacts (active GTP-bound form preferentially) with RGS14. It depends on Mg(2+) as a cofactor. As to expression, expressed in skeletal muscle cells.

Its subcellular location is the cell membrane. The catalysed reaction is GTP + H2O = GDP + phosphate + H(+). In terms of biological role, signal transducer in the Ras-MAPK signaling pathway that regulates cell proliferation and survival. Core component of the SHOC2-MRAS-PP1c (SMP) holophosphatase complex that regulates the MAPK pathway activation. The formation of the SMP complex only occurs when MRAS is GTP-bound. MRAS has low intrinsic GTPase activity and may require additional factors for activation. The SMP complex specifically dephosphorylates the inhibitory phosphorylation at 'Ser-259' of RAF1 kinase, 'Ser-365' of BRAF kinase and 'Ser-214' of ARAF kinase, stimulating their kinase activities. This is Ras-related protein M-Ras (Mras) from Rattus norvegicus (Rat).